The primary structure comprises 42 residues: Photosystem II reaction center protein J (42 aa).

Residues Ile-10–Phe-30 form a helical membrane-spanning segment.

The protein belongs to the PsbJ family. In terms of assembly, PSII is composed of 1 copy each of membrane proteins PsbA, PsbB, PsbC, PsbD, PsbE, PsbF, PsbH, PsbI, PsbJ, PsbK, PsbL, PsbM, PsbT, PsbX, PsbY, PsbZ, Psb30/Ycf12, at least 3 peripheral proteins of the oxygen-evolving complex and a large number of cofactors. It forms dimeric complexes.

It is found in the plastid. The protein localises to the chloroplast thylakoid membrane. Functionally, one of the components of the core complex of photosystem II (PSII). PSII is a light-driven water:plastoquinone oxidoreductase that uses light energy to abstract electrons from H(2)O, generating O(2) and a proton gradient subsequently used for ATP formation. It consists of a core antenna complex that captures photons, and an electron transfer chain that converts photonic excitation into a charge separation. This is Photosystem II reaction center protein J from Stigeoclonium helveticum (Green alga).